A 116-amino-acid chain; its full sequence is NADH-ubiquinone oxidoreductase chain 3 (116 aa).

Helical transmembrane passes span 4 to 24, 56 to 76, and 88 to 108; these read LIITLIINTALSTIIVLIAFW, FFLIAITFLLFDLEIALLLPL, and TLILAYCLIILLTAGLAYEWI.

It belongs to the complex I subunit 3 family. In terms of assembly, core subunit of respiratory chain NADH dehydrogenase (Complex I) which is composed of 45 different subunits. Interacts with TMEM186. Interacts with TMEM242.

It is found in the mitochondrion inner membrane. The enzyme catalyses a ubiquinone + NADH + 5 H(+)(in) = a ubiquinol + NAD(+) + 4 H(+)(out). Functionally, core subunit of the mitochondrial membrane respiratory chain NADH dehydrogenase (Complex I) which catalyzes electron transfer from NADH through the respiratory chain, using ubiquinone as an electron acceptor. Essential for the catalytic activity of complex I. The protein is NADH-ubiquinone oxidoreductase chain 3 of Osphranter robustus (Wallaroo).